A 516-amino-acid polypeptide reads, in one-letter code: Poly(U)-binding-splicing factor PUF60-B (516 aa).

RRM domains are found at residues 86 to 164 (CRVY…RPGS) and 183 to 261 (NRIY…KAVT). Residues 356-398 (TAPASMGTPTSAVQLHTEVKREEDSRRTAEDHSAPVGNGQDSE) form a disordered region. Over residues 372–388 (TEVKREEDSRRTAEDHS) the composition is skewed to basic and acidic residues. Residues 419 to 506 (TVMVLRNMVG…RKVVAELYDQ (88 aa)) enclose the RRM 3; atypical domain.

This sequence belongs to the RRM half pint family.

Its subcellular location is the nucleus. Functionally, DNA- and RNA-binding protein, involved in transcription repression and pre-mRNA splicing. The protein is Poly(U)-binding-splicing factor PUF60-B (puf60b) of Danio rerio (Zebrafish).